The following is a 444-amino-acid chain: Methylenetetrahydrofolate--tRNA-(uracil-5-)-methyltransferase TrmFO (444 aa).

10-15 (GAGLAG) serves as a coordination point for FAD.

This sequence belongs to the MnmG family. TrmFO subfamily. Requires FAD as cofactor.

The protein resides in the cytoplasm. It catalyses the reaction uridine(54) in tRNA + (6R)-5,10-methylene-5,6,7,8-tetrahydrofolate + NADH + H(+) = 5-methyluridine(54) in tRNA + (6S)-5,6,7,8-tetrahydrofolate + NAD(+). It carries out the reaction uridine(54) in tRNA + (6R)-5,10-methylene-5,6,7,8-tetrahydrofolate + NADPH + H(+) = 5-methyluridine(54) in tRNA + (6S)-5,6,7,8-tetrahydrofolate + NADP(+). In terms of biological role, catalyzes the folate-dependent formation of 5-methyl-uridine at position 54 (M-5-U54) in all tRNAs. In Streptococcus equi subsp. equi (strain 4047), this protein is Methylenetetrahydrofolate--tRNA-(uracil-5-)-methyltransferase TrmFO.